The chain runs to 513 residues: Histidine ammonia-lyase (513 aa).

The 5-imidazolinone (Ala-Gly) cross-link spans 144 to 146 (ASG). Ser145 bears the 2,3-didehydroalanine (Ser) mark.

This sequence belongs to the PAL/histidase family. Contains an active site 4-methylidene-imidazol-5-one (MIO), which is formed autocatalytically by cyclization and dehydration of residues Ala-Ser-Gly.

The protein resides in the cytoplasm. The enzyme catalyses L-histidine = trans-urocanate + NH4(+). The protein operates within amino-acid degradation; L-histidine degradation into L-glutamate; N-formimidoyl-L-glutamate from L-histidine: step 1/3. The polypeptide is Histidine ammonia-lyase (Streptococcus gordonii (strain Challis / ATCC 35105 / BCRC 15272 / CH1 / DL1 / V288)).